Consider the following 527-residue polypeptide: Peptide chain release factor 3 (527 aa).

A tr-type G domain is found at 9 to 277 (AKRRTFAIIS…AVVNWAPKPL (269 aa)). Residues 18–25 (SHPDAGKT), 86–90 (DTPGH), and 140–143 (NKLD) each bind GTP.

This sequence belongs to the TRAFAC class translation factor GTPase superfamily. Classic translation factor GTPase family. PrfC subfamily.

The protein localises to the cytoplasm. Functionally, increases the formation of ribosomal termination complexes and stimulates activities of RF-1 and RF-2. It binds guanine nucleotides and has strong preference for UGA stop codons. It may interact directly with the ribosome. The stimulation of RF-1 and RF-2 is significantly reduced by GTP and GDP, but not by GMP. The protein is Peptide chain release factor 3 of Pseudomonas syringae pv. syringae (strain B728a).